The chain runs to 240 residues: Ubiquinone biosynthesis O-methyltransferase (240 aa).

Residues Arg-36, Gly-60, Asp-81, and Leu-123 each contribute to the S-adenosyl-L-methionine site.

Belongs to the methyltransferase superfamily. UbiG/COQ3 family.

The enzyme catalyses a 3-demethylubiquinol + S-adenosyl-L-methionine = a ubiquinol + S-adenosyl-L-homocysteine + H(+). It catalyses the reaction a 3-(all-trans-polyprenyl)benzene-1,2-diol + S-adenosyl-L-methionine = a 2-methoxy-6-(all-trans-polyprenyl)phenol + S-adenosyl-L-homocysteine + H(+). It functions in the pathway cofactor biosynthesis; ubiquinone biosynthesis. Functionally, O-methyltransferase that catalyzes the 2 O-methylation steps in the ubiquinone biosynthetic pathway. The protein is Ubiquinone biosynthesis O-methyltransferase of Rickettsia bellii (strain OSU 85-389).